The chain runs to 526 residues: Alpha-1,3-mannosyl-glycoprotein 4-beta-N-acetylglucosaminyltransferase A (526 aa).

Residues 1–6 are Cytoplasmic-facing; it reads MRLRNG. A helical; Signal-anchor for type II membrane protein membrane pass occupies residues 7–27; it reads TVATALVFVTSFLTLSWYTTW. A coiled-coil region spans residues 28-63; it reads QNGKEKLIAYQREFLALKERLRVAEHRISQRSSELN. At 28 to 526 the chain is on the lumenal side; that stretch reads QNGKEKLIAY…NEIHIKKVTS (499 aa). The N-linked (GlcNAc...) asparagine glycan is linked to Asn-449. Ser-465 is subject to Phosphoserine.

Belongs to the glycosyltransferase 54 family. It depends on a divalent metal cation as a cofactor. N-glycosylated.

It is found in the golgi apparatus membrane. The protein localises to the secreted. The catalysed reaction is N(4)-{beta-D-GlcNAc-(1-&gt;2)-alpha-D-Man-(1-&gt;3)-[beta-D-GlcNAc-(1-&gt;2)-alpha-D-Man-(1-&gt;6)]-beta-D-Man-(1-&gt;4)-beta-D-GlcNAc-(1-&gt;4)-beta-D-GlcNAc}-L-asparaginyl-[protein] + UDP-N-acetyl-alpha-D-glucosamine = N(4)-{beta-D-GlcNAc-(1-&gt;2)-[beta-D-GlcNAc-(1-&gt;4)]-alpha-D-Man-(1-&gt;3)-[beta-D-GlcNAc-(1-&gt;2)-alpha-D-Man-(1-&gt;6)]-beta-D-Man-(1-&gt;4)-beta-D-GlcNAc-(1-&gt;4)-beta-D-GlcNAc}-L-asparaginyl-[protein] + UDP + H(+). The enzyme catalyses an N(4)-{beta-D-GlcNAc-(1-&gt;2)-alpha-D-Man-(1-&gt;3)-[alpha-D-Man-(1-&gt;6)]-beta-D-Man-(1-&gt;4)-beta-D-GlcNAc-(1-&gt;4)-beta-D-GlcNAc}-L-asparaginyl-[protein] + UDP-N-acetyl-alpha-D-glucosamine = an N(4)-{beta-D-GlcNAc-(1-&gt;2)-[beta-D-GlcNAc-(1-&gt;4)]-alpha-D-Man-(1-&gt;3)-[alpha-D-Man-(1-&gt;6)]-beta-D-Man-(1-&gt;4)-beta-D-GlcNAc-(1-&gt;4)-beta-D-GlcNAc}-L-asparaginyl-[protein] + UDP + H(+). It catalyses the reaction an N(4)-{beta-D-GlcNAc-(1-&gt;2)-alpha-D-Man-(1-&gt;3)-[beta-D-GlcNAc-(1-&gt;2)-[beta-D-GlcNAc-(1-&gt;6)]-alpha-D-Man-(1-&gt;6)]-beta-D-Man-(1-&gt;4)-beta-D-GlcNAc-(1-&gt;4)-beta-D-GlcNAc}-L-asparaginyl-[protein] + UDP-N-acetyl-alpha-D-glucosamine = an N(4)-{beta-D-GlcNAc-(1-&gt;2)-[beta-D-GlcNAc-(1-&gt;4)]-alpha-D-Man-(1-&gt;3)-[beta-D-GlcNAc-(1-&gt;2)-[beta-D-GlcNAc-(1-&gt;6)]-alpha-D-Man-(1-&gt;6)]-beta-D-Man-(1-&gt;4)-beta-D-GlcNAc-(1-&gt;4)-beta-D-GlcNAc}-L-asparaginyl-[protein] + UDP + H(+). It carries out the reaction an N(4)-{beta-D-GlcNAc-(1-&gt;2)-alpha-D-Man-(1-&gt;3)-[beta-D-GlcNAc-(1-&gt;2)-alpha-D-Man-(1-&gt;6)]-beta-D-Man-(1-&gt;4)-beta-D-GlcNAc-(1-&gt;4)-[alpha-L-Fuc-(1-&gt;6)]-beta-D-GlcNAc}-L-asparaginyl-[protein] + UDP-N-acetyl-alpha-D-glucosamine = N(4)-{beta-D-GlcNAc-(1-&gt;2)-[beta-D-GlcNAc-(1-&gt;4)]-alpha-D-Man-(1-&gt;3)-[beta-D-GlcNAc-(1-&gt;2)-alpha-D-Man-(1-&gt;6)]-beta-D-Man-(1-&gt;4)-beta-D-GlcNAc-(1-&gt;4)-[alpha-L-Fuc-(1-&gt;6)]-beta-D-GlcNAc}-asparaginyl-[protein] + UDP + H(+). The catalysed reaction is an N(4)-{beta-D-GlcNAc-(1-&gt;2)-alpha-D-Man-(1-&gt;3)-[beta-D-Gal-(1-&gt;4)-beta-D-GlcNAc-(1-&gt;2)-alpha-D-Man-(1-&gt;6)]-beta-D-Man-(1-&gt;4)-beta-D-GlcNAc-(1-&gt;4)-beta-D-GlcNAc}-L-asparaginyl-[protein] + UDP-N-acetyl-alpha-D-glucosamine = an N(4)-{beta-D-GlcNAc-(1-&gt;2)-[beta-D-GlcNAc-(1-&gt;4)]-alpha-D-Man-(1-&gt;3)-[beta-D-Gal-(1-&gt;4)-beta-D-GlcNAc-(1-&gt;2)-alpha-D-Man-(1-&gt;6)]-beta-D-Man-(1-&gt;4)-beta-D-GlcNAc-(1-&gt;4)-beta-D-GlcNAc}-L-asparaginyl-[protein] + UDP + H(+). The enzyme catalyses N(4)-{beta-D-GlcNAc-(1-&gt;2)-alpha-D-Man-(1-&gt;3)-[alpha-D-Man-(1-&gt;3)-{alpha-D-Man-(1-&gt;6)}-alpha-D-Man-(1-&gt;6)]-beta-D-Man-(1-&gt;4)-beta-D-GlcNAc-(1-&gt;4)-beta-D-GlcNAc}-asparaginyl-[protein] + UDP-N-acetyl-alpha-D-glucosamine = N(4)-{beta-D-GlcNAc-(1-&gt;2)-[beta-D-GlcNAc-(1-&gt;4)]-alpha-D-Man-(1-&gt;3)-[alpha-D-Man-(1-&gt;3)-{alpha-D-Man-(1-&gt;6)}-alpha-D-Man-(1-&gt;6)]-beta-D-Man-(1-&gt;4)-beta-D-GlcNAc-(1-&gt;4)-beta-D-GlcNAc}-asparaginyl-[protein] + UDP + H(+). It catalyses the reaction N(4)-{beta-D-GlcNAc-(1-&gt;2)-alpha-D-Man-(1-&gt;3)-beta-D-Man-(1-&gt;4)-beta-D-GlcNAc-(1-&gt;4)-beta-D-GlcNAc}-asparaginyl-[protein] + UDP-N-acetyl-alpha-D-glucosamine = N(4)-{beta-D-GlcNAc-(1-&gt;2)-[beta-D-GlcNAc-(1-&gt;4)]-alpha-D-Man-(1-&gt;3)-beta-D-Man-(1-&gt;4)-beta-D-GlcNAc-(1-&gt;4)-beta-D-GlcNAc}-asparaginyl-[protein] + UDP + H(+). The protein operates within protein modification; protein glycosylation. Inhibited by UDP. Glycosyltransferase that catalyze the transfer of GlcNAc from UDP-GlcNAc to the GlcNAcbeta1-2Manalpha1-3 arm of the core structure of N-linked glycans through a beta1-4 linkage and participates in the production of tri- and tetra-antennary N-linked sugar chains. Involved in glucose transport by mediating SLC2A2/GLUT2 glycosylation, thereby controlling cell-surface expression of SLC2A2 in pancreatic beta cells. The polypeptide is Alpha-1,3-mannosyl-glycoprotein 4-beta-N-acetylglucosaminyltransferase A (Rattus norvegicus (Rat)).